The sequence spans 468 residues: MNKGRVTQIMGPVVDVKFDGGKLPEIYNALTVKQSNENGSMNLTFEVALHLGDDTVRTVAMSSTDGLVRGTEVEDTGKAISVPVGDVTLGRVFNVLGDAIDLDGELPADVHRDPIHRQAPAFEELSTKVEILETGIKVVDLLAPYIKGGKIGLFGGAGVGKTVLIQELINNIAQEHGGISVFAGVGERTREGNDLYHEMSDSGVIKKTAMVFGQMNEPPGARQRVALTGLTMAEHFRDEQGQDVLLFIDNIFRFTQAGSEVSALLGRMPSAVGYQPTLATEMGQLQERITSTNKGSITSIQAVYVPADDYTDPAPATTFAHLDATTNLERRLTQMGIYPAVDPLASTSRALSPEIVGEEHYEVARQVQQTLQRYKELQDIIAILGMDELSEEDKLVVHRARRIQFFLSQNFHVAEQFTGQKGSYVPVKNTVSGFKEILEGKYDDLPEDAFRLVGGIEEVIENAKKMMA.

155 to 162 (GGAGVGKT) provides a ligand contact to ATP.

It belongs to the ATPase alpha/beta chains family. F-type ATPases have 2 components, CF(1) - the catalytic core - and CF(0) - the membrane proton channel. CF(1) has five subunits: alpha(3), beta(3), gamma(1), delta(1), epsilon(1). CF(0) has three main subunits: a(1), b(2) and c(9-12). The alpha and beta chains form an alternating ring which encloses part of the gamma chain. CF(1) is attached to CF(0) by a central stalk formed by the gamma and epsilon chains, while a peripheral stalk is formed by the delta and b chains.

It is found in the cell membrane. It catalyses the reaction ATP + H2O + 4 H(+)(in) = ADP + phosphate + 5 H(+)(out). Produces ATP from ADP in the presence of a proton gradient across the membrane. The catalytic sites are hosted primarily by the beta subunits. In Bacillus cereus (strain G9842), this protein is ATP synthase subunit beta.